A 300-amino-acid chain; its full sequence is Cell shape-determining protein MreC (300 aa).

Residues 1–17 (MARDRTRPEDFTRPLRR) lie on the Cytoplasmic side of the membrane. Residues 18–38 (ILVGGLVLLLLGIFLIWRIDS) traverse the membrane as a helical segment. Residues 39 to 300 (PRVEQFRAAL…APAAVEGADG (262 aa)) are Periplasmic-facing. The stretch at 74 to 117 (QSYTRIYEQNQELRRELQQMKAWKEAALQLEQKNARLLDLNQVR) forms a coiled coil. A disordered region spans residues 277–300 (SDPGKLVAEPPAPPAPAAVEGADG).

This sequence belongs to the MreC family.

Its subcellular location is the cell inner membrane. In terms of biological role, involved in formation and maintenance of cell shape. The sequence is that of Cell shape-determining protein MreC from Cereibacter sphaeroides (Rhodobacter sphaeroides).